Reading from the N-terminus, the 90-residue chain is Large ribosomal subunit protein bL27 (90 aa).

The interval 1-20 (MAHKKAGGSSRNGRDSAGKR) is disordered.

It belongs to the bacterial ribosomal protein bL27 family.

The polypeptide is Large ribosomal subunit protein bL27 (Rhodopseudomonas palustris (strain BisB18)).